The following is a 250-amino-acid chain: UPF0736 protein YjbA (250 aa).

This sequence belongs to the UPF0736 family.

This is UPF0736 protein YjbA (yjbA) from Bacillus subtilis (strain 168).